Here is a 203-residue protein sequence, read N- to C-terminus: LexA repressor (203 aa).

The segment at residues valine 28–lysine 48 is a DNA-binding region (H-T-H motif). Residues serine 122 and lysine 159 each act as for autocatalytic cleavage activity in the active site.

It belongs to the peptidase S24 family. In terms of assembly, homodimer.

The enzyme catalyses Hydrolysis of Ala-|-Gly bond in repressor LexA.. Functionally, represses a number of genes involved in the response to DNA damage (SOS response), including recA and lexA. In the presence of single-stranded DNA, RecA interacts with LexA causing an autocatalytic cleavage which disrupts the DNA-binding part of LexA, leading to derepression of the SOS regulon and eventually DNA repair. In Desulfatibacillum aliphaticivorans, this protein is LexA repressor.